A 429-amino-acid polypeptide reads, in one-letter code: Glutamate-1-semialdehyde 2,1-aminomutase (429 aa).

An N6-(pyridoxal phosphate)lysine modification is found at Lys267.

The protein belongs to the class-III pyridoxal-phosphate-dependent aminotransferase family. HemL subfamily. In terms of assembly, homodimer. Pyridoxal 5'-phosphate is required as a cofactor.

It is found in the cytoplasm. The catalysed reaction is (S)-4-amino-5-oxopentanoate = 5-aminolevulinate. It functions in the pathway porphyrin-containing compound metabolism; protoporphyrin-IX biosynthesis; 5-aminolevulinate from L-glutamyl-tRNA(Glu): step 2/2. The protein is Glutamate-1-semialdehyde 2,1-aminomutase of Herpetosiphon aurantiacus (strain ATCC 23779 / DSM 785 / 114-95).